A 671-amino-acid polypeptide reads, in one-letter code: MCGISAFITHPGHSRSPVLNGDAKQVVEELETSLDLIAHRGPDARGRWFSDNHHVGLGHVRLSIIDLSPSGNQPFHDEQGGIHAVVNGELYDYERYKAQLADEFKFVGNSDCEIVIALYKHYGLSFISHLRGEFAFVLWDENRQQLIAARDRYGIKSLYYTVHQNKLLVATEIKSFLAFGLEPEWCVRSLRDQSWRVDSTTFFEGVYKVRPGHYLICRPNEREEQHPYWDLEYPDKFAKDLRSEDEITEGVRERLLEAVRIRLKADVPVAVYLSGGIDSSSVAGMVSHLIKQGTKLGNETSLLPSSMKCYTVQFDEGSGADESAIARRTADFLGVDIHLVKMDEEALVSRFEDTTWYSEVPLPDLNGMGRLALAEAVHAQGIKAVITGEGSDEHFGGYDAFRADSLSEPDHSWPAMMTDTERQEAHALASKEAQYGIFGDFTPKVPISTKRMFYSNHVASSIARVGSLPFSDWTKVYGNSIPETTMIEGFDGRVRDNILKRWHPVHTAQYMFVKTFMPHFILRYNGDNIDMVHQVESRCPFLDHHLTEYVNNVPPSLKMRYNAKDKSWREKHILREAVKPFVTDEVYNMSKKAYMGPRKFWPGGPLHKKISELVTKANVENLGFVDWQATQDAMDGAFNKQEGLALRRIITVAQFVVLGQRFGVKRASGRR.

The Nucleophile role is filled by C2. Residues 2-220 enclose the Glutamine amidotransferase type-2 domain; it reads CGISAFITHP…PGHYLICRPN (219 aa). In terms of domain architecture, Asparagine synthetase spans 251–639; that stretch reads VRERLLEAVR…TQDAMDGAFN (389 aa).

Belongs to the asparagine synthetase family.

The protein operates within pigment biosynthesis. In terms of biological role, amidase; part of the gene cluster that mediates the biosynthesis of the yellow pigment chrysogine. Pyruvic acid and anthranilic acid are likely substrates for the nonribosomal peptide synthetase chry1/NRPS14, with pyruvic acid adenylated by the first A domain and anthranilic acid by the second. If pyruvic acid and anthranilic acid are merged and released from chry1/NRPS14 by hydrolysis, a subsequent amidation would lead to 2-pyruvoylaminobenzamide. This process is probably catalyzed by the amidotransferase chry2 using glutamine as amino donor. The dehydrogenase chry5 that has a terminal berberine bridge domain for C-N cyclization could catalyze the cyclization of 2-pyruvoylaminobenzamide to yield acetyl-4(3H)-quinazolidinone. A final reduction of acetyl-4(3H)-quinazolidinone catalyzed by the oxidoreductase chry4 would result in chrysogine. This chain is Amidase chry2, found in Gibberella zeae (strain ATCC MYA-4620 / CBS 123657 / FGSC 9075 / NRRL 31084 / PH-1) (Wheat head blight fungus).